The following is a 541-amino-acid chain: tRNA uridine(34) acetyltransferase (541 aa).

A radical S-adenosyl-L-methionine (rSAM) region spans residues 76-336 (KPVRTISGVA…GEYKPYREEE (261 aa)). The Radical SAM core domain maps to 79–350 (RTISGVAVVA…ISYAKSIMPK (272 aa)). Residues Cys-96, Cys-101, and Cys-104 each coordinate [4Fe-4S] cluster. Acetyl-CoA is bound by residues Lys-156, 467 to 470 (QLHV), 491 to 493 (YGR), and Tyr-524. The 141-residue stretch at 401–541 (VMYKKGIMPD…VGAYMGKYLE (141 aa)) folds into the N-acetyltransferase domain.

This sequence belongs to the ELP3 family. [4Fe-4S] cluster is required as a cofactor.

The enzyme catalyses uridine(34) in tRNA + acetyl-CoA + S-adenosyl-L-methionine + H2O = 5-(carboxymethyl)uridine(34) in tRNA + 5'-deoxyadenosine + L-methionine + CoA + 2 H(+). It functions in the pathway tRNA modification. TRNA uridine(34) acetyltransferase, which mediates formation of carboxymethyluridine in the wobble base at position 34 in tRNAs. The proposed mechanism is the following: (i) recruits S-adenosyl-L-methionine and cleaves it to generate a 5'-deoxyadenosine radical (5'-dA) in the radical S-adenosyl-L-methionine (rSAM) region, (ii) hydrolyzes acetyl-CoA in the N-acetyltransferase domain and (iii) an acetyl radical is formed by the products of the two domains and (iv) is transferred onto the C5 position of uridine(34) in the bound tRNA molecule. Does not show protein lysine acetyltransferase activity. This chain is tRNA uridine(34) acetyltransferase, found in Methanocaldococcus jannaschii (strain ATCC 43067 / DSM 2661 / JAL-1 / JCM 10045 / NBRC 100440) (Methanococcus jannaschii).